The sequence spans 360 residues: Peptide chain release factor 1 (360 aa).

Position 237 is an N5-methylglutamine (Gln-237).

This sequence belongs to the prokaryotic/mitochondrial release factor family. Post-translationally, methylated by PrmC. Methylation increases the termination efficiency of RF1.

It is found in the cytoplasm. Functionally, peptide chain release factor 1 directs the termination of translation in response to the peptide chain termination codons UAG and UAA. In Teredinibacter turnerae (strain ATCC 39867 / T7901), this protein is Peptide chain release factor 1.